The primary structure comprises 484 residues: Glutamate--tRNA ligase (484 aa).

The 'HIGH' region motif lies at 11–21 (PSPTGYLHIGN). The 'KMSKS' region motif lies at 252–256 (KLSKR). K255 contacts ATP.

This sequence belongs to the class-I aminoacyl-tRNA synthetase family. Glutamate--tRNA ligase type 1 subfamily. As to quaternary structure, monomer.

The protein resides in the cytoplasm. The catalysed reaction is tRNA(Glu) + L-glutamate + ATP = L-glutamyl-tRNA(Glu) + AMP + diphosphate. Its function is as follows. Catalyzes the attachment of glutamate to tRNA(Glu) in a two-step reaction: glutamate is first activated by ATP to form Glu-AMP and then transferred to the acceptor end of tRNA(Glu). This chain is Glutamate--tRNA ligase, found in Staphylococcus aureus (strain MRSA252).